Reading from the N-terminus, the 114-residue chain is Large ribosomal subunit protein bL19 (114 aa).

It belongs to the bacterial ribosomal protein bL19 family.

Functionally, this protein is located at the 30S-50S ribosomal subunit interface and may play a role in the structure and function of the aminoacyl-tRNA binding site. This chain is Large ribosomal subunit protein bL19, found in Lactococcus lactis subsp. lactis (strain IL1403) (Streptococcus lactis).